The sequence spans 214 residues: 14-3-3 protein homolog 2 (214 aa).

The protein belongs to the 14-3-3 family.

The chain is 14-3-3 protein homolog 2 from Schistosoma mansoni (Blood fluke).